A 465-amino-acid chain; its full sequence is Chromosomal replication initiator protein DnaA (465 aa).

The domain I, interacts with DnaA modulators stretch occupies residues 1-80 (MLWTDCLTRL…VEILVDSRPG (80 aa)). The segment at 80 to 127 (GAILSPAEQPATTTAALSSTPVVPQRVKKEVVEPAATQSNKILNSKKR) is domain II. A domain III, AAA+ region region spans residues 128-345 (LLNPLFTFSL…GALNKVVAIA (218 aa)). ATP contacts are provided by Gly173, Gly175, Lys176, and Thr177. Residues 346–465 (RFKGSQIDLD…YKNLLRLLQS (120 aa)) are domain IV, binds dsDNA.

This sequence belongs to the DnaA family. Oligomerizes as a right-handed, spiral filament on DNA at oriC.

The protein localises to the cytoplasm. Plays an essential role in the initiation and regulation of chromosomal replication. ATP-DnaA binds to the origin of replication (oriC) to initiate formation of the DNA replication initiation complex once per cell cycle. Binds the DnaA box (a 9 base pair repeat at the origin) and separates the double-stranded (ds)DNA. Forms a right-handed helical filament on oriC DNA; dsDNA binds to the exterior of the filament while single-stranded (ss)DNA is stabiized in the filament's interior. The ATP-DnaA-oriC complex binds and stabilizes one strand of the AT-rich DNA unwinding element (DUE), permitting loading of DNA polymerase. After initiation quickly degrades to an ADP-DnaA complex that is not apt for DNA replication. Binds acidic phospholipids. The polypeptide is Chromosomal replication initiator protein DnaA (Acinetobacter baylyi (strain ATCC 33305 / BD413 / ADP1)).